The sequence spans 967 residues: Probable serine/threonine-protein kinase DDB_G0290621 (967 aa).

3 disordered regions span residues 65 to 122 (EDSD…KEKE), 215 to 251 (SSLSSSINNSSNNNSNISSSPLSSSPLTLSSSSSSSS), and 287 to 326 (QQQLPPPPPSQQQQQQQQQQQQQNNSMLQQSNNNNISPRT). Acidic residues predominate over residues 66 to 94 (DSDEDDDDEEDEEDEEDSDEEEDDDVVED). The span at 95–122 (DNTKDIGKSRDSDKSIKGKEKGKEKEKE) shows a compositional bias: basic and acidic residues. The span at 297-326 (QQQQQQQQQQQQQNNSMLQQSNNNNISPRT) shows a compositional bias: low complexity. The region spanning 345–610 (FNDSNKIGEG…EIRSRLSEII (266 aa)) is the Protein kinase domain. ATP is bound by residues 351–359 (IGEGGQCSI) and Lys368. Asp467 acts as the Proton acceptor in catalysis. Disordered stretches follow at residues 634 to 667 (DDSLINNNNNNNQNNNNQNNNNNNNNNNNNNNNN), 700 to 752 (STSN…NNNI), and 862 to 882 (TSSSSNKNNNNNNNDNNNPSN). A compositionally biased stretch (low complexity) spans 639-666 (NNNNNNNQNNNNQNNNNNNNNNNNNNNN). Residues 863-882 (SSSSNKNNNNNNNDNNNPSN) are compositionally biased toward low complexity.

The protein belongs to the protein kinase superfamily. TKL Ser/Thr protein kinase family.

The enzyme catalyses L-seryl-[protein] + ATP = O-phospho-L-seryl-[protein] + ADP + H(+). It carries out the reaction L-threonyl-[protein] + ATP = O-phospho-L-threonyl-[protein] + ADP + H(+). The protein is Probable serine/threonine-protein kinase DDB_G0290621 of Dictyostelium discoideum (Social amoeba).